A 254-amino-acid polypeptide reads, in one-letter code: Ribosomal RNA small subunit methyltransferase J (254 aa).

S-adenosyl-L-methionine-binding positions include 107–108 (RD), 123–124 (ER), and aspartate 174.

The protein belongs to the methyltransferase superfamily. RsmJ family.

It localises to the cytoplasm. The catalysed reaction is guanosine(1516) in 16S rRNA + S-adenosyl-L-methionine = N(2)-methylguanosine(1516) in 16S rRNA + S-adenosyl-L-homocysteine + H(+). Functionally, specifically methylates the guanosine in position 1516 of 16S rRNA. In Coxiella burnetii (strain Dugway 5J108-111), this protein is Ribosomal RNA small subunit methyltransferase J.